We begin with the raw amino-acid sequence, 645 residues long: Beta-galactosidase BgaA (645 aa).

Arginine 102 contacts substrate. Position 106 (cysteine 106) interacts with Zn(2+). Residue asparagine 140 coordinates substrate. Glutamate 141 acts as the Proton donor in catalysis. Residues cysteine 150, cysteine 152, and cysteine 155 each coordinate Zn(2+). Residue glutamate 312 is the Nucleophile of the active site. Residues tryptophan 320 and 360 to 363 (EQMH) contribute to the substrate site.

Belongs to the glycosyl hydrolase 42 family.

The enzyme catalyses Hydrolysis of terminal non-reducing beta-D-galactose residues in beta-D-galactosides.. Hydrolyzes chromogen 5-bromo-4-chloro-3-indolyl-beta-D-galactopyranoside (X-Gal) and p-nitrophenyl-beta-D-galactoside (pNPGal). This Thermus sp protein is Beta-galactosidase BgaA.